The primary structure comprises 415 residues: Gamma-glutamyl phosphate reductase (415 aa).

Belongs to the gamma-glutamyl phosphate reductase family.

The protein resides in the cytoplasm. The catalysed reaction is L-glutamate 5-semialdehyde + phosphate + NADP(+) = L-glutamyl 5-phosphate + NADPH + H(+). The protein operates within amino-acid biosynthesis; L-proline biosynthesis; L-glutamate 5-semialdehyde from L-glutamate: step 2/2. In terms of biological role, catalyzes the NADPH-dependent reduction of L-glutamate 5-phosphate into L-glutamate 5-semialdehyde and phosphate. The product spontaneously undergoes cyclization to form 1-pyrroline-5-carboxylate. The chain is Gamma-glutamyl phosphate reductase from Bacillus cereus (strain ZK / E33L).